We begin with the raw amino-acid sequence, 607 residues long: Developmental gene 1062 protein (607 aa).

Disordered stretches follow at residues 62–84, 334–451, and 568–602; these read LQGQ…HNNQ, ICDD…SNFQ, and DNNT…NDLL. The span at 334 to 363 shows a compositional bias: low complexity; sequence ICDDSSNSSTPSLSSYSNGNNKYNNNNNDS. Acidic residues predominate over residues 364–382; the sequence is SESDESDDDDNNDDDDNDS. 2 stretches are compositionally biased toward low complexity: residues 383-451 and 568-582; these read IDFN…SNFQ and DNNT…ISVN.

The sequence is that of Developmental gene 1062 protein (DG1062) from Dictyostelium discoideum (Social amoeba).